A 688-amino-acid polypeptide reads, in one-letter code: Hid-1 family protein P19A11.07c (688 aa).

The protein belongs to the hid-1 family.

Its subcellular location is the cytoplasm. It localises to the nucleus. This chain is Hid-1 family protein P19A11.07c, found in Schizosaccharomyces pombe (strain 972 / ATCC 24843) (Fission yeast).